Consider the following 137-residue polypeptide: MDAKNTTHRIGQTGPVEKQTGIRHLFAAASYSLGGAKRLIGEAAFRHELIAFAAAMIAFIIVGATFFQYVAMAILFLLMMAFEAINTAIEEIVDRVSPEISEMGKNAKDLGSFACLCLIVANGVYAAYVVIFDGFMN.

Glu42 contributes to the a divalent metal cation binding site. 2 helical membrane passes run 49–67 (LIAFAAAMIAFIIVGATFF) and 73–89 (AILFLLMMAFEAINTAI). Glu83 acts as the Proton acceptor in catalysis. Position 90 (Glu90) interacts with a divalent metal cation. Residues 112 to 132 (SFACLCLIVANGVYAAYVVIF) traverse the membrane as a helical segment.

Belongs to the bacterial diacylglycerol kinase family. It depends on Mg(2+) as a cofactor.

Its subcellular location is the cell inner membrane. The catalysed reaction is a 1,2-diacyl-sn-glycerol + ATP = a 1,2-diacyl-sn-glycero-3-phosphate + ADP + H(+). Functionally, catalyzes the ATP-dependent phosphorylation of sn-l,2-diacylglycerol (DAG) to phosphatidic acid. Involved in the recycling of diacylglycerol produced as a by-product during membrane-derived oligosaccharide (MDO) biosynthesis. The chain is Diacylglycerol kinase (dgkA) from Sinorhizobium sp.